A 131-amino-acid chain; its full sequence is ATP synthase epsilon chain (131 aa).

This sequence belongs to the ATPase epsilon chain family. As to quaternary structure, F-type ATPases have 2 components, CF(1) - the catalytic core - and CF(0) - the membrane proton channel. CF(1) has five subunits: alpha(3), beta(3), gamma(1), delta(1), epsilon(1). CF(0) has three main subunits: a, b and c.

The protein resides in the cell membrane. In terms of biological role, produces ATP from ADP in the presence of a proton gradient across the membrane. The chain is ATP synthase epsilon chain from Bacillus licheniformis (strain ATCC 14580 / DSM 13 / JCM 2505 / CCUG 7422 / NBRC 12200 / NCIMB 9375 / NCTC 10341 / NRRL NRS-1264 / Gibson 46).